A 112-amino-acid chain; its full sequence is Large ribosomal subunit protein eL30 (112 aa).

The protein belongs to the eukaryotic ribosomal protein eL30 family. In terms of tissue distribution, expressed in roots and leaves.

The sequence is that of Large ribosomal subunit protein eL30 from Triticum aestivum (Wheat).